A 318-amino-acid polypeptide reads, in one-letter code: MLIDHYIMDFMSITPDRLSGASLHLIKAGGKRLRPLITLLTARMLGGLEAEARAIPLAASIETAHTFSLIHDDIMDRDEVRRGVPTTHVVYGDDWAILAGDTLHAAAFKMIADSREWGMSHEQAYRAFKVLSEAAIQISRGQAYDMLFEETWDVDVADYLNMVRLKTGALIEAAARIGAVAAGAGSEIEKMMGEVGMNAGIAFQIRDDILGVIGDPKVTGKPVYNDLRRGKKTLLVIYAVKKAGRREIVDLIGPKASEDDLKRAASIIVDSGALDYAESRARFYVERARDILSRVPAVDAESKELLNLLLDYIVERVK.

Isopentenyl diphosphate-binding residues include Lys31, Arg34, and His65. Mg(2+) is bound by residues Asp72 and Asp76. Residue Arg81 coordinates an all-trans-polyprenyl diphosphate. Arg82 serves as a coordination point for isopentenyl diphosphate. Residues Lys166, Thr167, and Gln204 each contribute to the an all-trans-polyprenyl diphosphate site.

This sequence belongs to the FPP/GGPP synthase family. As to quaternary structure, homodimer. Mg(2+) serves as cofactor.

It catalyses the reaction isopentenyl diphosphate + (2E,6E,10E)-geranylgeranyl diphosphate = (2E,6E,10E,14E)-geranylfarnesyl diphosphate + diphosphate. In terms of biological role, probably involved in biosynthesis of the precursor for C25 (sesterterpanyl chain) moiety of C25-C25 diether (2,3-di-O-sesterterpanyl-sn-glycero) membrane lipid. Catalyzes the condensation of isopentenyl pyrophosphate with the allylic pyrophosphates to yield all-trans geranylfarnesyl diphosphate (GFPP). Geranylgeranyl diphosphate (GGPP) is the preferred substrate, however methylallyl diphosphate (DMAPP), farnesyl diphosphate (FPP) and geranyl diphosphate (GPP) can also be used as allylic substrate. This chain is Geranylfarnesyl diphosphate synthase (fgs), found in Aeropyrum pernix.